The following is a 366-amino-acid chain: Protein lifeguard 1 (366 aa).

Positions 1–141 (MSHEKSFLVS…GPPSYYDNQD (141 aa)) are disordered. Composition is skewed to pro residues over residues 14–44 (YPPPNPGYPGGPQPSMAPYPGAPYPQAPFQP) and 67–109 (GPYP…PNPY). 7 consecutive transmembrane segments (helical) span residues 160–180 (VFLVLTLQLSVTLSTVAVFTF), 192–212 (VWTYYVSYAIFFVSLIVLSCC), 223–243 (LVALSILTVSLSYMVGMIASF), 248–268 (AVIMAVGITTTVCFTVVIFSM), 278–298 (VGVLLVSVVVLILFAILCIFI), 302–322 (VLEIVYASLGALLFTCFLAVD), and 341–361 (FAALNLYTDIINIFLYILTII).

Belongs to the BI1 family. LFG subfamily.

It localises to the membrane. Its function is as follows. Potential apoptotic regulator. In Bos taurus (Bovine), this protein is Protein lifeguard 1 (GRINA).